Here is a 59-residue protein sequence, read N- to C-terminus: Small, acid-soluble spore protein H 2 (59 aa).

This sequence belongs to the SspH family.

The protein resides in the spore core. This Bacillus anthracis protein is Small, acid-soluble spore protein H 2 (sspH2).